A 78-amino-acid chain; its full sequence is Toxin BmTxKS4 (78 aa).

Residues 1-21 form the signal peptide; it reads MKLKISFLILVLFSVFFAIEG. Positions 22–32 are excised as a propeptide; that stretch reads IIKWFPASVNG.

Contains 3 disulfide bonds. Expressed by the venom gland.

The protein resides in the secreted. Reversibly inhibits potassium channels. The polypeptide is Toxin BmTxKS4 (Olivierus martensii (Manchurian scorpion)).